The sequence spans 704 residues: Elongation factor G (704 aa).

Residues 8-290 (ARYRNIGISA…AVIDYLPSPV (283 aa)) form the tr-type G domain. GTP contacts are provided by residues 17–24 (AHIDAGKT), 88–92 (DTPGH), and 142–145 (NKMD).

This sequence belongs to the TRAFAC class translation factor GTPase superfamily. Classic translation factor GTPase family. EF-G/EF-2 subfamily.

It localises to the cytoplasm. Catalyzes the GTP-dependent ribosomal translocation step during translation elongation. During this step, the ribosome changes from the pre-translocational (PRE) to the post-translocational (POST) state as the newly formed A-site-bound peptidyl-tRNA and P-site-bound deacylated tRNA move to the P and E sites, respectively. Catalyzes the coordinated movement of the two tRNA molecules, the mRNA and conformational changes in the ribosome. In Cronobacter sakazakii (strain ATCC BAA-894) (Enterobacter sakazakii), this protein is Elongation factor G.